We begin with the raw amino-acid sequence, 963 residues long: Isoleucine--tRNA ligase (963 aa).

A 'HIGH' region motif is present at residues Pro66 to His76. Glu596 contacts L-isoleucyl-5'-AMP. The short motif at Lys637–Ser641 is the 'KMSKS' region element. ATP is bound at residue Lys640. The Zn(2+) site is built by Cys926, Cys929, Cys946, and Cys949.

The protein belongs to the class-I aminoacyl-tRNA synthetase family. IleS type 1 subfamily. In terms of assembly, monomer. Zn(2+) is required as a cofactor.

It is found in the cytoplasm. It catalyses the reaction tRNA(Ile) + L-isoleucine + ATP = L-isoleucyl-tRNA(Ile) + AMP + diphosphate. Functionally, catalyzes the attachment of isoleucine to tRNA(Ile). As IleRS can inadvertently accommodate and process structurally similar amino acids such as valine, to avoid such errors it has two additional distinct tRNA(Ile)-dependent editing activities. One activity is designated as 'pretransfer' editing and involves the hydrolysis of activated Val-AMP. The other activity is designated 'posttransfer' editing and involves deacylation of mischarged Val-tRNA(Ile). The polypeptide is Isoleucine--tRNA ligase (Cupriavidus pinatubonensis (strain JMP 134 / LMG 1197) (Cupriavidus necator (strain JMP 134))).